Here is a 259-residue protein sequence, read N- to C-terminus: Global transcriptional regulator CodY (259 aa).

The interval 1–155 is GAF domain; the sequence is MELLAKTRKL…SATVVGMEIL (155 aa). The segment at residues 203-222 is a DNA-binding region (H-T-H motif); the sequence is ASKIADRVGITRSVIVNALR. Ser215 bears the Phosphoserine mark.

This sequence belongs to the CodY family.

The protein resides in the cytoplasm. DNA-binding global transcriptional regulator which is involved in the adaptive response to starvation and acts by directly or indirectly controlling the expression of numerous genes in response to nutrient availability. During rapid exponential growth, CodY is highly active and represses genes whose products allow adaptation to nutrient depletion. This Bacillus cytotoxicus (strain DSM 22905 / CIP 110041 / 391-98 / NVH 391-98) protein is Global transcriptional regulator CodY.